The following is an 833-amino-acid chain: Leucine--tRNA ligase (833 aa).

A 'HIGH' region motif is present at residues Pro41 to His52. Positions Lys610 to Ser614 match the 'KMSKS' region motif. Residue Lys613 participates in ATP binding.

This sequence belongs to the class-I aminoacyl-tRNA synthetase family.

Its subcellular location is the cytoplasm. The enzyme catalyses tRNA(Leu) + L-leucine + ATP = L-leucyl-tRNA(Leu) + AMP + diphosphate. The protein is Leucine--tRNA ligase of Streptococcus pyogenes serotype M6 (strain ATCC BAA-946 / MGAS10394).